The primary structure comprises 159 residues: ATP synthase subunit b (159 aa).

The helical transmembrane segment at 2-22 threads the bilayer; sequence NISIPQIIAAILNFIILLLIV.

Belongs to the ATPase B chain family. As to quaternary structure, F-type ATPases have 2 components, F(1) - the catalytic core - and F(0) - the membrane proton channel. F(1) has five subunits: alpha(3), beta(3), gamma(1), delta(1), epsilon(1). F(0) has three main subunits: a(1), b(2) and c(10-14). The alpha and beta chains form an alternating ring which encloses part of the gamma chain. F(1) is attached to F(0) by a central stalk formed by the gamma and epsilon chains, while a peripheral stalk is formed by the delta and b chains.

Its subcellular location is the cell membrane. F(1)F(0) ATP synthase produces ATP from ADP in the presence of a proton or sodium gradient. F-type ATPases consist of two structural domains, F(1) containing the extramembraneous catalytic core and F(0) containing the membrane proton channel, linked together by a central stalk and a peripheral stalk. During catalysis, ATP synthesis in the catalytic domain of F(1) is coupled via a rotary mechanism of the central stalk subunits to proton translocation. Its function is as follows. Component of the F(0) channel, it forms part of the peripheral stalk, linking F(1) to F(0). The sequence is that of ATP synthase subunit b from Clostridium botulinum (strain Loch Maree / Type A3).